We begin with the raw amino-acid sequence, 198 residues long: Ribonuclease HII (198 aa).

The RNase H type-2 domain occupies 3 to 194; sequence RRVCGVDEAG…VKRCLALGQQ (192 aa). 3 residues coordinate a divalent metal cation: Asp9, Glu10, and Asp101.

It belongs to the RNase HII family. Mn(2+) serves as cofactor. Mg(2+) is required as a cofactor.

Its subcellular location is the cytoplasm. It catalyses the reaction Endonucleolytic cleavage to 5'-phosphomonoester.. Its function is as follows. Endonuclease that specifically degrades the RNA of RNA-DNA hybrids. The protein is Ribonuclease HII of Laribacter hongkongensis (strain HLHK9).